A 429-amino-acid polypeptide reads, in one-letter code: Adenylosuccinate synthetase (429 aa).

GTP-binding positions include 12-18 and 40-42; these read GDEGKGK and GHT. Asp-13 acts as the Proton acceptor in catalysis. Mg(2+)-binding residues include Asp-13 and Gly-40. IMP is bound by residues 13-16, 38-41, Thr-128, Arg-142, Gln-223, Thr-238, and Arg-302; these read DEGK and NAGH. Residue His-41 is the Proton donor of the active site. 298–304 lines the substrate pocket; it reads TVTGRPR. Residues Arg-304, 330–332, and 412–414 each bind GTP; these read LLD and SVG.

The protein belongs to the adenylosuccinate synthetase family. In terms of assembly, homodimer. The cofactor is Mg(2+).

It is found in the cytoplasm. The catalysed reaction is IMP + L-aspartate + GTP = N(6)-(1,2-dicarboxyethyl)-AMP + GDP + phosphate + 2 H(+). It functions in the pathway purine metabolism; AMP biosynthesis via de novo pathway; AMP from IMP: step 1/2. Its function is as follows. Plays an important role in the de novo pathway of purine nucleotide biosynthesis. Catalyzes the first committed step in the biosynthesis of AMP from IMP. This is Adenylosuccinate synthetase from Lactobacillus helveticus (strain DPC 4571).